A 240-amino-acid chain; its full sequence is UDP-2,3-diacylglucosamine hydrolase (240 aa).

Residues Asp-8, His-10, Asp-41, Asn-79, and His-114 each coordinate Mn(2+). 79-80 is a substrate binding site; the sequence is NR. Substrate is bound by residues Asp-122, Ser-160, Asn-164, Lys-167, and His-195. Mn(2+)-binding residues include His-195 and His-197.

It belongs to the LpxH family. It depends on Mn(2+) as a cofactor.

The protein localises to the cell inner membrane. It catalyses the reaction UDP-2-N,3-O-bis[(3R)-3-hydroxytetradecanoyl]-alpha-D-glucosamine + H2O = 2-N,3-O-bis[(3R)-3-hydroxytetradecanoyl]-alpha-D-glucosaminyl 1-phosphate + UMP + 2 H(+). It participates in glycolipid biosynthesis; lipid IV(A) biosynthesis; lipid IV(A) from (3R)-3-hydroxytetradecanoyl-[acyl-carrier-protein] and UDP-N-acetyl-alpha-D-glucosamine: step 4/6. In terms of biological role, hydrolyzes the pyrophosphate bond of UDP-2,3-diacylglucosamine to yield 2,3-diacylglucosamine 1-phosphate (lipid X) and UMP by catalyzing the attack of water at the alpha-P atom. Involved in the biosynthesis of lipid A, a phosphorylated glycolipid that anchors the lipopolysaccharide to the outer membrane of the cell. The protein is UDP-2,3-diacylglucosamine hydrolase of Enterobacter sp. (strain 638).